The chain runs to 251 residues: S-acyl fatty acid synthase thioesterase, medium chain (251 aa).

Residues S90 and H226 contribute to the active site.

Belongs to the thioesterase family.

It catalyses the reaction (9Z)-octadecenoyl-[ACP] + H2O = (9Z)-octadecenoate + holo-[ACP] + H(+). In terms of biological role, in fatty acid biosynthesis chain termination and release of the free fatty acid product is achieved by hydrolysis of the thio ester by a thioesterase I, a component of the fatty acid synthetase complex. The chain length of the released fatty acid is usually C16. However, in the mammary glands of non-ruminant mammals, and in the uropygial gland of certain waterfowl there exists a second thioesterase which releases medium-chain length fatty acids (C8 to C2). This Anas platyrhynchos (Mallard) protein is S-acyl fatty acid synthase thioesterase, medium chain.